Reading from the N-terminus, the 893-residue chain is Probable disease resistance protein At1g62630 (893 aa).

Positions 24–68 form a coiled coil; it reads GSYTHNLEKNLVALETTMEELKAKRDDLLRRLKREEDRGLQRLSE. An NB-ARC domain is found at 136-440; sequence TEQASTSAFE…CEEIIDGSEG (305 aa). 179-186 is an ATP binding site; the sequence is GMGGVGKT. LRR repeat units lie at residues 516–537, 538–559, 571–593, 595–617, 618–640, and 641–663; these read VVRR…YECM, ELTT…SEIK, KLAV…ISNL, SLKY…QELK, KIIH…SSLH, and NLKV…KELE.

Belongs to the disease resistance NB-LRR family.

Its function is as follows. Probable disease resistance protein. This Arabidopsis thaliana (Mouse-ear cress) protein is Probable disease resistance protein At1g62630.